The sequence spans 214 residues: Orotate phosphoribosyltransferase (214 aa).

Residue K26 coordinates 5-phospho-alpha-D-ribose 1-diphosphate. 34–35 contributes to the orotate binding site; the sequence is FF. 5-phospho-alpha-D-ribose 1-diphosphate-binding positions include 72 to 73, R99, K100, K103, H105, and 124 to 132; these read YK and DDVITAGTA. T128 and R157 together coordinate orotate.

This sequence belongs to the purine/pyrimidine phosphoribosyltransferase family. PyrE subfamily. In terms of assembly, homodimer. Mg(2+) is required as a cofactor.

It catalyses the reaction orotidine 5'-phosphate + diphosphate = orotate + 5-phospho-alpha-D-ribose 1-diphosphate. Its pathway is pyrimidine metabolism; UMP biosynthesis via de novo pathway; UMP from orotate: step 1/2. Functionally, catalyzes the transfer of a ribosyl phosphate group from 5-phosphoribose 1-diphosphate to orotate, leading to the formation of orotidine monophosphate (OMP). The polypeptide is Orotate phosphoribosyltransferase (Pseudomonas fluorescens (strain SBW25)).